Consider the following 1444-residue polypeptide: DNA polymerase III PolC-type (1444 aa).

The 157-residue stretch at Tyr428–Ala584 folds into the Exonuclease domain.

This sequence belongs to the DNA polymerase type-C family. PolC subfamily.

It is found in the cytoplasm. It carries out the reaction DNA(n) + a 2'-deoxyribonucleoside 5'-triphosphate = DNA(n+1) + diphosphate. In terms of biological role, required for replicative DNA synthesis. This DNA polymerase also exhibits 3' to 5' exonuclease activity. This chain is DNA polymerase III PolC-type, found in Listeria innocua serovar 6a (strain ATCC BAA-680 / CLIP 11262).